The following is a 62-amino-acid chain: DNA-directed RNA polymerase subunit Rpo10 (62 aa).

4 residues coordinate Zn(2+): Cys-6, Cys-9, Cys-43, and Cys-44.

It belongs to the archaeal Rpo10/eukaryotic RPB10 RNA polymerase subunit family. In terms of assembly, part of the RNA polymerase complex. The cofactor is Zn(2+).

It is found in the cytoplasm. The enzyme catalyses RNA(n) + a ribonucleoside 5'-triphosphate = RNA(n+1) + diphosphate. In terms of biological role, DNA-dependent RNA polymerase (RNAP) catalyzes the transcription of DNA into RNA using the four ribonucleoside triphosphates as substrates. The protein is DNA-directed RNA polymerase subunit Rpo10 of Methanosarcina acetivorans (strain ATCC 35395 / DSM 2834 / JCM 12185 / C2A).